The chain runs to 352 residues: Ion-translocating oxidoreductase complex subunit D (352 aa).

A run of 5 helical transmembrane segments spans residues 20-40 (IMLL…WFFG), 42-62 (GTLV…ALVL), 78-109 (ALLT…VIIA), 123-143 (PAMI…TSWL), and 148-168 (IAVN…GHTA). T187 bears the FMN phosphoryl threonine mark. 5 helical membrane passes run 214-234 (ILAG…GVWL), 242-262 (WHIP…GWLF), 267-287 (LAAP…FFIL), 301-321 (LIFG…GGYP), and 322-342 (DGVA…DYYT).

Belongs to the NqrB/RnfD family. As to quaternary structure, the complex is composed of six subunits: RsxA, RsxB, RsxC, RsxD, RsxE and RsxG. FMN is required as a cofactor.

It localises to the cell inner membrane. Its function is as follows. Part of a membrane-bound complex that couples electron transfer with translocation of ions across the membrane. Required to maintain the reduced state of SoxR. In Escherichia coli O6:K15:H31 (strain 536 / UPEC), this protein is Ion-translocating oxidoreductase complex subunit D.